Reading from the N-terminus, the 337-residue chain is MARIGSFLILLSLTYALTLCICDNASNFGGNKRNLFPDFYRSSCPRAEEIVRSVVAKAFERETRMAASLMRLHFHDCFVQGCDGSLLLDTSGSIVTEKNSNPNSRSARGFEVVDEIKAALENECPNTVSCADALTLAARDSSVLTGGPSWTVPLGRRDSATASRAKPNKDLPEPDNLFDTIFLRFSNEGLNLTDLVALSGSHTIGFSRCTSFRQRLYNQSGSGSPDTTLEKSYAAILRQRCPRSGGDQNLSELDINSAGRFDNSYFKNLIENMGLLNSDQVLFSSNEQSRELVKKYAEDQEEFFEQFAESMIKMGKISPLTGSSGEIRKKCRKINNS.

A signal peptide spans Met-1–Cys-22. Asn-24 is a glycosylation site (N-linked (GlcNAc...) asparagine). Cystine bridges form between Cys-44–Cys-124, Cys-77–Cys-82, Cys-130–Cys-331, and Cys-209–Cys-241. Residue His-75 is the Proton acceptor of the active site. Asp-76, Val-79, Gly-81, Asp-83, and Ser-85 together coordinate Ca(2+). Pro-172 contacts substrate. N-linked (GlcNAc...) asparagine glycosylation occurs at Asn-191. His-202 provides a ligand contact to heme b. Residue Thr-203 coordinates Ca(2+). N-linked (GlcNAc...) asparagine glycosylation is found at Asn-218 and Asn-249. Ca(2+)-binding residues include Asp-254, Ser-257, and Asp-262.

Belongs to the peroxidase family. Classical plant (class III) peroxidase subfamily. Heme b is required as a cofactor. Ca(2+) serves as cofactor.

It is found in the secreted. It catalyses the reaction 2 a phenolic donor + H2O2 = 2 a phenolic radical donor + 2 H2O. Functionally, removal of H(2)O(2), oxidation of toxic reductants, biosynthesis and degradation of lignin, suberization, auxin catabolism, response to environmental stresses such as wounding, pathogen attack and oxidative stress. These functions might be dependent on each isozyme/isoform in each plant tissue. The sequence is that of Peroxidase 14 (PER14) from Arabidopsis thaliana (Mouse-ear cress).